Here is a 61-residue protein sequence, read N- to C-terminus: Small ribosomal subunit protein uS14 (61 aa).

Zn(2+) is bound by residues cysteine 24, cysteine 27, cysteine 40, and cysteine 43.

Belongs to the universal ribosomal protein uS14 family. Zinc-binding uS14 subfamily. In terms of assembly, part of the 30S ribosomal subunit. Contacts proteins S3 and S10. Zn(2+) is required as a cofactor.

In terms of biological role, binds 16S rRNA, required for the assembly of 30S particles and may also be responsible for determining the conformation of the 16S rRNA at the A site. This Clostridium botulinum (strain ATCC 19397 / Type A) protein is Small ribosomal subunit protein uS14.